The sequence spans 326 residues: WD repeat-containing protein slr1409 (326 aa).

6 WD repeats span residues 47-77, 88-118, 129-159, 169-199, 210-240, and 252-282; these read GSDV…TLWT, GQKP…RLWN, PHRA…KIFT, LKSG…HLIN, TGQG…KLWN, and VPTG…RFWQ.

This chain is WD repeat-containing protein slr1409, found in Synechocystis sp. (strain ATCC 27184 / PCC 6803 / Kazusa).